The primary structure comprises 695 residues: UvrABC system protein B (695 aa).

The Helicase ATP-binding domain maps to 45–434 (EGIEDGLSFQ…QVVEQVVRPT (390 aa)). ATP is bound at residue 58-65 (GVTGSGKT). A Beta-hairpin motif is present at residues 111 to 134 (YYDYYQPEAYVPQRDLFIEKDSSI). Residues 449–602 (QVDDLLSEIN…QMAFNEANGI (154 aa)) form the Helicase C-terminal domain. A UVR domain is found at 646 to 681 (SKEIKRLEKLMMDHAKNLEFEKAAQVRDQLAKLKAQ).

Belongs to the UvrB family. Forms a heterotetramer with UvrA during the search for lesions. Interacts with UvrC in an incision complex.

Its subcellular location is the cytoplasm. In terms of biological role, the UvrABC repair system catalyzes the recognition and processing of DNA lesions. A damage recognition complex composed of 2 UvrA and 2 UvrB subunits scans DNA for abnormalities. Upon binding of the UvrA(2)B(2) complex to a putative damaged site, the DNA wraps around one UvrB monomer. DNA wrap is dependent on ATP binding by UvrB and probably causes local melting of the DNA helix, facilitating insertion of UvrB beta-hairpin between the DNA strands. Then UvrB probes one DNA strand for the presence of a lesion. If a lesion is found the UvrA subunits dissociate and the UvrB-DNA preincision complex is formed. This complex is subsequently bound by UvrC and the second UvrB is released. If no lesion is found, the DNA wraps around the other UvrB subunit that will check the other stand for damage. The chain is UvrABC system protein B from Cupriavidus pinatubonensis (strain JMP 134 / LMG 1197) (Cupriavidus necator (strain JMP 134)).